The primary structure comprises 93 residues: Protein NONRESPONDING TO OXYLIPINS 2, mitochondrial (93 aa).

A mitochondrion-targeting transit peptide spans 1–27 (MASRCRSLSKPAFSAFRSAMNKPSIRP).

Expressed in cotyledons, roots and flowers.

It localises to the mitochondrion. In terms of biological role, essential for mitochondrial morphology, functionality and distribution. Contributes to 9-lipoxygenase (9-LOX)-derived oxylipin synthesis, but not to brassinosteroids (BRs) signaling. Required for waving-inducing oxylipin 9-hydroxyoctadecatrienoic acid and derivatives (e.g. 9-HOT, 2-HOE, 13-HOT, 13-HOD, 13-KOD, 12,13-KHOD, 9-HOT, 9-HOD, 9-KOT, 9-KOD and 9,10-KHOE)-mediated root development regulation, including callose deposition, root waving and lateral roots formation. Involved in basal plant defense toward pathogenic bacteria (e.g. Pseudomonas syringae pv tomato), both in compatible (e.g. Pst DC3000) and incompatible (e.g. Pst DC3000 avrRPM1) interactions, as well as against obligate biotrophic pathogenic fungi (e.g. Golovinomyces cichoracearum), probably via the promotion of callose deposition in the cell wall. Confers sensitivity to the herbicide isoxaben, a herbicide inhibiting cellulose synthesis and altering the cell wall. This Arabidopsis thaliana (Mouse-ear cress) protein is Protein NONRESPONDING TO OXYLIPINS 2, mitochondrial.